The sequence spans 258 residues: Homeobox protein VENTX (258 aa).

The span at Met1–Thr32 shows a compositional bias: polar residues. 2 disordered regions span residues Met1–Arg93 and Ser227–Leu248. The homeobox DNA-binding region spans Ala91 to Met150.

As to expression, expressed in bone marrow of patients recovering from chemotherapy. Also expressed in an erythroleukemia cell line.

It is found in the nucleus. In terms of biological role, may be involved in ventralization. This Homo sapiens (Human) protein is Homeobox protein VENTX (VENTX).